Consider the following 374-residue polypeptide: MAQINAVYYVSDSNEFIEEKAEKMATGLTAKPWQEMPEAEKQESFAYKGKVVSINEDPSYGEGSIVTISFPVAYEVPDFPSILTTTYGRLSYEPNVKLLDLQFSNDLVERFPGPLYGIEGIRDLVEVEGRPLAMSVAKGAIGRSIDSFHEQMLAHSYGGIDIIQDDERLFEHNWTPYEQRVPAGLAAIAEAAERTGRTPLYVVNLTGKTFELKERAREAIGLGAPALMLNVYAYGIDVLQGLREDPEIDVPIFAHSSLTGMMTRSKQHGIASRLLLGKLLRMAGADAVLFPSPYGRIGINPEEAQRVKDQLTMTTQMKRAFPIPSAGIDFQTIATVRQDFGEDVIINLGGSVHRYKGGVEAGGKAFIEALNSAN.

Substrate is bound by residues Lys-138, 164–167 (QDDE), His-255, Gly-327, and 349–350 (GG). Asp-166 serves as a coordination point for Mg(2+).

Belongs to the RuBisCO large chain family. Type IV subfamily. Homodimer. The cofactor is Mg(2+).

It carries out the reaction 5-methylsulfanyl-2,3-dioxopentyl phosphate = 2-hydroxy-5-methylsulfanyl-3-oxopent-1-enyl phosphate. It functions in the pathway amino-acid biosynthesis; L-methionine biosynthesis via salvage pathway; L-methionine from S-methyl-5-thio-alpha-D-ribose 1-phosphate: step 3/6. In terms of biological role, catalyzes the enolization of 2,3-diketo-5-methylthiopentyl-1-phosphate (DK-MTP-1-P) into 2-hydroxy-3-keto-5-methylthiopentenyl-1-phosphate (HK-MTPenyl-1-P). The chain is Putative 2,3-diketo-5-methylthiopentyl-1-phosphate enolase (mtnW) from Shouchella clausii (strain KSM-K16) (Alkalihalobacillus clausii).